A 1037-amino-acid chain; its full sequence is Probable inorganic carbon transporter subunit DabA 2 (1037 aa).

The Zn(2+) site is built by Cys-460, Asp-462, His-719, and Cys-734.

This sequence belongs to the inorganic carbon transporter (TC 9.A.2) DabA family. Forms a complex with DabB. Requires Zn(2+) as cofactor.

The protein localises to the cell inner membrane. Functionally, part of an energy-coupled inorganic carbon pump. This is Probable inorganic carbon transporter subunit DabA 2 from Nitrobacter winogradskyi (strain ATCC 25391 / DSM 10237 / CIP 104748 / NCIMB 11846 / Nb-255).